The primary structure comprises 423 residues: Histidine--tRNA ligase (423 aa).

Belongs to the class-II aminoacyl-tRNA synthetase family. As to quaternary structure, homodimer.

It localises to the cytoplasm. The catalysed reaction is tRNA(His) + L-histidine + ATP = L-histidyl-tRNA(His) + AMP + diphosphate + H(+). This chain is Histidine--tRNA ligase, found in Actinobacillus pleuropneumoniae serotype 7 (strain AP76).